The following is a 249-amino-acid chain: Acetate transporter protein patA (249 aa).

6 helical membrane passes run 42-62 (IGSP…TLSM), 71-91 (AITN…LVLV), 106-126 (VFGG…PAFG), 141-161 (AIGY…VAAM), 169-189 (GMLG…FSFA), and 202-222 (AAGA…GHLM).

Belongs to the acetate uptake transporter (AceTr) (TC 2.A.96) family.

The protein resides in the endoplasmic reticulum membrane. It participates in mycotoxin biosynthesis; patulin biosynthesis. Its function is as follows. Acetate transporter protein; part of the gene cluster that mediates the biosynthesis of patulin, an acetate-derived tetraketide mycotoxin produced by several fungal species that shows antimicrobial properties against several bacteria. May be involved in the uptake of acetate, a substrate for the synthesis of 6-methylsalicylic acid by the polyketide synthase patK. The protein is Acetate transporter protein patA of Penicillium expansum (Blue mold rot fungus).